The sequence spans 321 residues: Lipoyl synthase (321 aa).

Residues cysteine 68, cysteine 73, cysteine 79, cysteine 94, cysteine 98, cysteine 101, and serine 308 each coordinate [4Fe-4S] cluster. A Radical SAM core domain is found at 80 to 297 (FNHGTATFMI…KEIALELGFT (218 aa)).

The protein belongs to the radical SAM superfamily. Lipoyl synthase family. [4Fe-4S] cluster serves as cofactor.

It localises to the cytoplasm. It carries out the reaction [[Fe-S] cluster scaffold protein carrying a second [4Fe-4S](2+) cluster] + N(6)-octanoyl-L-lysyl-[protein] + 2 oxidized [2Fe-2S]-[ferredoxin] + 2 S-adenosyl-L-methionine + 4 H(+) = [[Fe-S] cluster scaffold protein] + N(6)-[(R)-dihydrolipoyl]-L-lysyl-[protein] + 4 Fe(3+) + 2 hydrogen sulfide + 2 5'-deoxyadenosine + 2 L-methionine + 2 reduced [2Fe-2S]-[ferredoxin]. The protein operates within protein modification; protein lipoylation via endogenous pathway; protein N(6)-(lipoyl)lysine from octanoyl-[acyl-carrier-protein]: step 2/2. Catalyzes the radical-mediated insertion of two sulfur atoms into the C-6 and C-8 positions of the octanoyl moiety bound to the lipoyl domains of lipoate-dependent enzymes, thereby converting the octanoylated domains into lipoylated derivatives. This is Lipoyl synthase from Vibrio campbellii (strain ATCC BAA-1116).